A 218-amino-acid polypeptide reads, in one-letter code: Orotate phosphoribosyltransferase (218 aa).

Lys-26 is a 5-phospho-alpha-D-ribose 1-diphosphate binding site. 34–35 (FF) is a binding site for orotate. 5-phospho-alpha-D-ribose 1-diphosphate contacts are provided by residues 72-73 (YK), Arg-99, Lys-100, Lys-103, His-105, and 124-132 (DDVITAGTA). Thr-128 and Arg-156 together coordinate orotate.

It belongs to the purine/pyrimidine phosphoribosyltransferase family. PyrE subfamily. Homodimer. Requires Mg(2+) as cofactor.

It carries out the reaction orotidine 5'-phosphate + diphosphate = orotate + 5-phospho-alpha-D-ribose 1-diphosphate. It functions in the pathway pyrimidine metabolism; UMP biosynthesis via de novo pathway; UMP from orotate: step 1/2. Functionally, catalyzes the transfer of a ribosyl phosphate group from 5-phosphoribose 1-diphosphate to orotate, leading to the formation of orotidine monophosphate (OMP). This Hamiltonella defensa subsp. Acyrthosiphon pisum (strain 5AT) protein is Orotate phosphoribosyltransferase.